The following is a 1035-amino-acid chain: Protein P1-P2 (1035 aa).

The N-terminal stretch at 1–22 (MYSKLMFFFALCSISFLFTSEA) is a signal peptide. The next 3 helical transmembrane spans lie at 115–135 (FLAV…LILA), 137–157 (FSAL…LALL), and 167–187 (TVSF…FSLL). Residues 206 to 400 (IDGFKSFTIP…GLTSPTYVFE (195 aa)) form the Peptidase S39 domain. Active-site for protease activity residues include His-254, Asp-289, and Ser-357. Positions 455 to 534 (SKEDLSGKRS…PPQKSPKETA (80 aa)) are disordered. Residues 463–477 (RSARHRPRNKRRRQL) are compositionally biased toward basic residues. Composition is skewed to basic and acidic residues over residues 478 to 488 (HPKDKQRRWER) and 499 to 519 (GKDK…RESD). Residues 829 to 944 (NYLTPTDCSG…SNPADLAAYK (116 aa)) form the RdRp catalytic domain.

In terms of processing, specific enzymatic cleavages in vivo yield mature proteins. The protease probably cleaves itself and releases the RdRp (Potential). Cleavages have been shown in the P1 protein, but since the N-terminus containing the serine protease is shared between P1 and P1-P2, cleavages should also occur within the P1-P2 protein.

It localises to the membrane. The enzyme catalyses RNA(n) + a ribonucleoside 5'-triphosphate = RNA(n+1) + diphosphate. Precursor from which the RNA-dependent RNA polymerase (RdRp) is probably released. RNA-dependent RNA polymerase plays an essential role in virus replication (Potential). The polypeptide is Protein P1-P2 (Turnip yellows virus (isolate FL-1) (TuYV)).